The primary structure comprises 113 residues: Hydrogenase maturation factor HypA (113 aa).

Position 2 (H2) interacts with Ni(2+). The Zn(2+) site is built by C73, C76, C89, and C92.

It belongs to the HypA/HybF family.

Its function is as follows. Involved in the maturation of [NiFe] hydrogenases. Required for nickel insertion into the metal center of the hydrogenase. This is Hydrogenase maturation factor HypA from Aeromonas salmonicida (strain A449).